The following is a 959-amino-acid chain: Isoleucine--tRNA ligase (959 aa).

The 'HIGH' region motif lies at P60–H70. E569 is an L-isoleucyl-5'-AMP binding site. The short motif at K610 to S614 is the 'KMSKS' region element. Residue K613 participates in ATP binding. Residues C928, C931, C948, and C951 each contribute to the Zn(2+) site.

It belongs to the class-I aminoacyl-tRNA synthetase family. IleS type 1 subfamily. Monomer. The cofactor is Zn(2+).

It is found in the cytoplasm. The catalysed reaction is tRNA(Ile) + L-isoleucine + ATP = L-isoleucyl-tRNA(Ile) + AMP + diphosphate. Its function is as follows. Catalyzes the attachment of isoleucine to tRNA(Ile). As IleRS can inadvertently accommodate and process structurally similar amino acids such as valine, to avoid such errors it has two additional distinct tRNA(Ile)-dependent editing activities. One activity is designated as 'pretransfer' editing and involves the hydrolysis of activated Val-AMP. The other activity is designated 'posttransfer' editing and involves deacylation of mischarged Val-tRNA(Ile). The chain is Isoleucine--tRNA ligase from Crocosphaera subtropica (strain ATCC 51142 / BH68) (Cyanothece sp. (strain ATCC 51142)).